The primary structure comprises 760 residues: DNA-directed RNA polymerase subunit beta' (760 aa).

Residues Cys76, Cys78, Cys90, and Cys93 each coordinate Zn(2+). 3 residues coordinate Mg(2+): Asp594, Asp596, and Asp598.

The protein belongs to the RNA polymerase beta' chain family. RpoC1 subfamily. In plastids the minimal PEP RNA polymerase catalytic core is composed of four subunits: alpha, beta, beta', and beta''. When a (nuclear-encoded) sigma factor is associated with the core the holoenzyme is formed, which can initiate transcription. It depends on Mg(2+) as a cofactor. Requires Zn(2+) as cofactor.

It is found in the plastid. Its subcellular location is the chloroplast. The catalysed reaction is RNA(n) + a ribonucleoside 5'-triphosphate = RNA(n+1) + diphosphate. DNA-dependent RNA polymerase catalyzes the transcription of DNA into RNA using the four ribonucleoside triphosphates as substrates. The chain is DNA-directed RNA polymerase subunit beta' from Bigelowiella natans (Pedinomonas minutissima).